Here is a 448-residue protein sequence, read N- to C-terminus: Cyclic dof factor 3 (448 aa).

The segment at 26–108 is disordered; it reads AVTVEDDEED…DGKTLKKPTK (83 aa). The span at 29–39 shows a compositional bias: acidic residues; sequence VEDDEEDDWSG. Over residues 40–54 the composition is skewed to basic and acidic residues; that stretch reads GDDKSPEKVTPELSD. A compositionally biased stretch (low complexity) spans 55 to 69; that stretch reads KNNNNCNDNSFNNSK. Polar residues predominate over residues 80–99; the sequence is STDQIESSDTPEDNQQTTPD. The segment at 110–164 adopts a Dof-type zinc-finger fold; sequence LPCPRCKSMETKFCYYNNYNINQPRHFCKACQRYWTAGGTMRNVPVGAGRRKNKS. Zn(2+) is bound by residues C112, C115, C137, and C140. Disordered regions lie at residues 243-269 and 332-370; these read NGDD…AQSG and SSSP…KQKA. Polar residues-rich tracts occupy residues 246 to 259 and 332 to 347; these read DCSS…SNNH and SSSP…NSPT. Over residues 351-368 the composition is skewed to basic and acidic residues; sequence HPRDEGSSKKDNETERKQ.

As to quaternary structure, interacts with ADO2 (via kelch repeats) and ADO3 (via kelch repeats). As to expression, expressed in the vasculature of cotyledons and hypocotyls, leaves and roots.

It localises to the nucleus. Its function is as follows. Transcription factor that binds specifically to a 5'-AA[AG]G-3' consensus core sequence. Regulates a photoperiodic flowering response. Transcriptional repressor of 'CONSTANS' expression. This chain is Cyclic dof factor 3 (CDF3), found in Arabidopsis thaliana (Mouse-ear cress).